The chain runs to 349 residues: Hepatic sodium/bile acid cotransporter (349 aa).

The Extracellular segment spans residues 1 to 22 (MEAHNASAPFNFTLPPNFGKRP). 2 N-linked (GlcNAc...) asparagine glycosylation sites follow: Asn5 and Asn11. The chain crosses the membrane as a helical span at residues 23-44 (TDLALSVILVFMLFFIMLSLGC). The Cytoplasmic portion of the chain corresponds to 45 to 47 (TME). The chain crosses the membrane as a helical span at residues 48-83 (FSKIKAHLWKPKGLAIALVAQYGIMPLTAFVLGKVF). The Extracellular portion of the chain corresponds to 84-86 (RLK). A discontinuously helical transmembrane segment spans residues 87-112 (NIEALAILVCGCSPGGNLSNVFSLAM). At 113–115 (KGD) the chain is on the cytoplasmic side. The chain crosses the membrane as a helical span at residues 116–142 (MNLSIVMTTCSTFCALGMMPLLLYIYS). Residues 143 to 156 (RGIYDGDLKDKVPY) lie on the Extracellular side of the membrane. Residues 157 to 179 (KGIVISLVLVLIPCTIGIVLKSK) form a helical membrane-spanning segment. Residues 180–183 (RPQY) lie on the Cytoplasmic side of the membrane. A helical membrane pass occupies residues 184–217 (MRYVIKGGMIIILLCSVAVTVLSAINVGKSIMFA). Over 218-219 (MT) the chain is Extracellular. The helical transmembrane segment at 220–243 (PLLIATSSLMPFIGFLLGYVLSAL) threads the bilayer. Residues 244–247 (FCLN) lie on the Cytoplasmic side of the membrane. A discontinuously helical membrane pass occupies residues 248-273 (GRCRRTVSMETGCQNVQLCSTILNVA). Over 274 to 280 (FPPEVIG) the chain is Extracellular. A helical transmembrane segment spans residues 281 to 311 (PLFFFPLLYMIFQLGEGLLLIAIFWCYEKFK). Residues 312–349 (TPKDKTKMIYTAATTEETIPGALGNGTYKGEDCSPCTA) are Cytoplasmic-facing.

The protein belongs to the bile acid:sodium symporter (BASS) (TC 2.A.28) family. In terms of assembly, (Microbial infection) Interacts with the myristoylated pre-S1 domain of hepatitis B virus large envelope protein; myristoylation is essential for this interaction. In terms of tissue distribution, expressed in liver. Expressed in placental trophoblasts.

The protein resides in the cell membrane. It catalyses the reaction taurocholate(out) + 2 Na(+)(out) = taurocholate(in) + 2 Na(+)(in). It carries out the reaction cholate(out) + 2 Na(+)(out) = cholate(in) + 2 Na(+)(in). The enzyme catalyses estrone 3-sulfate(out) + 2 Na(+)(out) = estrone 3-sulfate(in) + 2 Na(+)(in). The catalysed reaction is taurochenodeoxycholate(out) + 2 Na(+)(out) = taurochenodeoxycholate(in) + 2 Na(+)(in). It catalyses the reaction tauroursodeoxycholate(out) + 2 Na(+)(out) = tauroursodeoxycholate(in) + 2 Na(+)(in). It carries out the reaction glycocholate(out) + 2 Na(+)(out) = glycocholate(in) + 2 Na(+)(in). The enzyme catalyses tauronorcholate(out) + 2 Na(+)(out) = tauronorcholate(in) + 2 Na(+)(in). The catalysed reaction is taurodeoxycholate(out) + 2 Na(+)(out) = taurodeoxycholate(in) + 2 Na(+)(in). It catalyses the reaction tauroallocholate(out) + 2 Na(+)(out) = tauroallocholate(in) + 2 Na(+)(in). It carries out the reaction taurohyodeoxycholate(out) + 2 Na(+)(out) = taurohyodeoxycholate(in) + 2 Na(+)(in). The enzyme catalyses taurohyocholate(out) + 2 Na(+)(out) = taurohyocholate(in) + 2 Na(+)(in). The catalysed reaction is tauro-beta-muricholate(out) + 2 Na(+)(out) = tauro-beta-muricholate(in) + 2 Na(+)(in). Its activity is regulated as follows. The transport of bile acids is sodium-dependent. Functionally, as a major transporter of conjugated bile salts from plasma into the hepatocyte, it plays a key role in the enterohepatic circulation of bile salts necessary for the solubilization and absorption of dietary fat and fat-soluble vitamins. It is strictly dependent on the extracellular presence of sodium. It exhibits broad substrate specificity and transports various bile acids, such as taurocholate, cholate, as well as non-bile acid organic compounds, such as estrone sulfate. Works collaboratively with the ileal transporter (NTCP2), the organic solute transporter (OST), and the bile salt export pump (BSEP), to ensure efficacious biological recycling of bile acids during enterohepatic circulation. Its function is as follows. (Microbial infection) Acts as an entry receptor for hepatitis B virus (HBV). The recognition for human SLC10A1/NTCP is highly specific. The chain is Hepatic sodium/bile acid cotransporter (SLC10A1) from Homo sapiens (Human).